Reading from the N-terminus, the 205-residue chain is Basigin (205 aa).

The first 18 residues, 1–18 (MAAALFVLLGFALLGTHG), serve as a signal peptide directing secretion. Residues 19 to 103 (ASGAAGTVFT…MGTANIQLHG (85 aa)) enclose the Ig-like C2-type domain. Residues 19 to 205 (ASGAAGTVFT…AIITLRVRSH (187 aa)) lie on the Extracellular side of the membrane. 2 disulfide bridges follow: cysteine 41–cysteine 87 and cysteine 126–cysteine 185. 3 N-linked (GlcNAc...) asparagine glycosylation sites follow: asparagine 44, asparagine 152, and asparagine 186. The Ig-like V-type domain maps to 105-199 (PRVKAVKSSE…SKGSDQAIIT (95 aa)).

In terms of assembly, homooligomer. Interacts with VEGFA, KDR/VEGFR2, PPIA/CYPA, SLC16A12, SLC16A11, ATP1B2, MAG, L1CAM and AJAP1. Interacts with SLC16A1; interaction mediates SLC16A1 targeting to the plasma membrane. Interacts with SLC16A3; interaction mediates SLC16A3 targeting to the plasma membrane. Interacts with PPIL2; regulates BSG transport to the cell membrane. Interacts with XKR8; promoting its localization at the cell membrane. Interacts with SLC16A6; this interaction mediates targeting to the plasma membrane.

It localises to the cell membrane. It is found in the endoplasmic reticulum membrane. The protein localises to the basolateral cell membrane. Its function is as follows. Signaling receptor for cyclophilins, essential for PPIA/CYPA and PPIB/CYPB-dependent signaling related to chemotaxis and adhesion of immune cells. Plays an important role in targeting the monocarboxylate transporters SLC16A1/GLUT1, SLC16A3, SLC16A8, SLC16A11 and SLC16A12 to the plasma membrane. Acts as a coreceptor for vascular endothelial growth factor receptor 2 (KDR/VEGFR2) in endothelial cells enhancing its VEGFA-mediated activation and downstream signaling. Promotes angiogenesis through EPAS1/HIF2A-mediated up-regulation of VEGFA and KDR/VEGFR2 in endothelial cells. This is Basigin (BSG) from Bos taurus (Bovine).